The sequence spans 267 residues: Undecaprenyl-diphosphatase (267 aa).

8 helical membrane passes run 1-21 (MTLF…FLPV), 40-60 (GLAI…LYFW), 83-103 (AFLA…GLII), 111-131 (MMRS…VLYW), 144-164 (GWTL…LIPG), 189-209 (AMLM…ADVI), 219-239 (DGAL…ALMM), and 245-265 (VSFT…LVYA).

The protein belongs to the UppP family.

Its subcellular location is the cell inner membrane. The catalysed reaction is di-trans,octa-cis-undecaprenyl diphosphate + H2O = di-trans,octa-cis-undecaprenyl phosphate + phosphate + H(+). Its function is as follows. Catalyzes the dephosphorylation of undecaprenyl diphosphate (UPP). Confers resistance to bacitracin. This chain is Undecaprenyl-diphosphatase, found in Roseobacter denitrificans (strain ATCC 33942 / OCh 114) (Erythrobacter sp. (strain OCh 114)).